We begin with the raw amino-acid sequence, 352 residues long: Quinolinate synthase (352 aa).

2 residues coordinate iminosuccinate: histidine 48 and serine 69. A [4Fe-4S] cluster-binding site is contributed by cysteine 114. Iminosuccinate is bound by residues 140 to 142 (YAN) and serine 157. Cysteine 201 is a binding site for [4Fe-4S] cluster. Iminosuccinate contacts are provided by residues 227 to 229 (HPE) and threonine 244. Cysteine 298 provides a ligand contact to [4Fe-4S] cluster.

Belongs to the quinolinate synthase family. Type 1 subfamily. It depends on [4Fe-4S] cluster as a cofactor.

The protein localises to the cytoplasm. It carries out the reaction iminosuccinate + dihydroxyacetone phosphate = quinolinate + phosphate + 2 H2O + H(+). It participates in cofactor biosynthesis; NAD(+) biosynthesis; quinolinate from iminoaspartate: step 1/1. Its function is as follows. Catalyzes the condensation of iminoaspartate with dihydroxyacetone phosphate to form quinolinate. The protein is Quinolinate synthase of Pseudomonas syringae pv. tomato (strain ATCC BAA-871 / DC3000).